Consider the following 544-residue polypeptide: Secreted aspartic protease 9 (544 aa).

An N-terminal signal peptide occupies residues 1–17 (MRLNSVALLSLVATALA). The segment at 31 to 50 (GESKDDLSPEDDSNPRFVKR) is disordered. Positions 65–479 (YMATLKIGSN…DLDDYEVSLA (415 aa)) constitute a Peptidase A1 domain. The active site involves aspartate 83. Residue 83–85 (DTG) participates in pepstatin A binding. A disulfide bond links cysteine 98 and cysteine 195. N-linked (GlcNAc...) asparagine glycosylation is found at asparagine 212, asparagine 240, and asparagine 252. Aspartate 371 is a catalytic residue. 371–375 (DTGST) contacts pepstatin A. An intrachain disulfide couples cysteine 406 to cysteine 441. N-linked (GlcNAc...) asparagine glycans are attached at residues asparagine 422 and asparagine 499. Residues 500-519 (SSGSGTTSSSGTSTSTSTRH) form a disordered region. A lipid anchor (GPI-anchor amidated serine) is attached at serine 520. Positions 521 to 544 (AGSIISKPVYGLLLSLLISCYVLV) are cleaved as a propeptide — removed in mature form. The helical transmembrane segment at 524–544 (IISKPVYGLLLSLLISCYVLV) threads the bilayer.

The protein belongs to the peptidase A1 family. As to quaternary structure, monomer. The GPI-anchor is attached to the protein in the endoplasmic reticulum and serves to target the protein to the cell surface. There, the glucosamine-inositol phospholipid moiety is cleaved off and the GPI-modified mannoprotein is covalently attached via its lipidless GPI glycan remnant to the 1,6-beta-glucan of the outer cell wall layer.

The protein localises to the cell membrane. It is found in the secreted. The protein resides in the cell wall. It carries out the reaction Preferential cleavage at the carboxyl of hydrophobic amino acids, but fails to cleave 15-Leu-|-Tyr-16, 16-Tyr-|-Leu-17 and 24-Phe-|-Phe-25 of insulin B chain. Activates trypsinogen, and degrades keratin.. Functionally, secreted aspartic peptidases (SAPs) are a group of ten acidic hydrolases considered as key virulence factors. These enzymes supply the fungus with nutrient amino acids as well as are able to degrade the selected host's proteins involved in the immune defense. Moreover, acts toward human hemoglobin though limited proteolysis to generate a variety of antimicrobial hemocidins, enabling to compete with the other microorganisms of the same physiological niche using the microbicidal peptides generated from the host protein. Plays a key role in defense against host by cleaving histatin-5 (Hst 5), a peptide from human saliva that carries out fungicidal activity. The cleavage rate decreases in an order of SAP2 &gt; SAP9 &gt; SAP3 &gt; SAP7 &gt; SAP4 &gt; SAP1 &gt; SAP8. The first cleavage occurs between residues 'Lys-17' and 'His-18' of Hst 5, giving DSHAKRHHGYKRKFHEK and HHSHRGY peptides. Simultaneously, the DSHAKRHHGYKRK peptide is also formed. Further fragmentation by SAP9 results in FHEK product. The sequence is that of Secreted aspartic protease 9 from Candida albicans (strain SC5314 / ATCC MYA-2876) (Yeast).